The following is a 377-amino-acid chain: S-adenosylmethionine decarboxylase proenzyme 2 (377 aa).

Residues Glu-24 and Glu-27 contribute to the active site. Ser-84 (schiff-base intermediate with substrate; via pyruvic acid) is an active-site residue. Ser-84 bears the Pyruvic acid (Ser); by autocatalysis mark. Cys-98 functions as the Proton donor; for catalytic activity in the catalytic mechanism. Active-site proton acceptor; for processing activity residues include Ser-246 and His-259.

Belongs to the eukaryotic AdoMetDC family. It depends on pyruvate as a cofactor. Post-translationally, is synthesized initially as an inactive proenzyme. Formation of the active enzyme involves a self-maturation process in which the active site pyruvoyl group is generated from an internal serine residue via an autocatalytic post-translational modification. Two non-identical subunits are generated from the proenzyme in this reaction, and the pyruvate is formed at the N-terminus of the alpha chain, which is derived from the carboxyl end of the proenzyme. The post-translation cleavage follows an unusual pathway, termed non-hydrolytic serinolysis, in which the side chain hydroxyl group of the serine supplies its oxygen atom to form the C-terminus of the beta chain, while the remainder of the serine residue undergoes an oxidative deamination to produce ammonia and the pyruvoyl group blocking the N-terminus of the alpha chain.

The catalysed reaction is S-adenosyl-L-methionine + H(+) = S-adenosyl 3-(methylsulfanyl)propylamine + CO2. Its pathway is amine and polyamine biosynthesis; S-adenosylmethioninamine biosynthesis; S-adenosylmethioninamine from S-adenosyl-L-methionine: step 1/1. In Dianthus caryophyllus (Carnation), this protein is S-adenosylmethionine decarboxylase proenzyme 2 (SAMDC2).